A 1409-amino-acid polypeptide reads, in one-letter code: Inositol hexakisphosphate and diphosphoinositol-pentakisphosphate kinase 1 (1409 aa).

64-65 (KK) is a binding site for substrate. Residues Arg-145, Lys-198, His-205, Arg-224, 248–251 (EEFM), and 257–259 (DVK) each bind ATP. Substrate is bound at residue 224 to 225 (RK). Substrate contacts are provided by Lys-259 and Arg-273. ATP is bound by residues Ser-275, Asp-320, and 332-334 (DVN). 337-340 (SFVK) serves as a coordination point for substrate. The polyphosphoinositide-binding domain stretch occupies residues 382-453 (PTTSGTMMEL…VLDITRLLLA (72 aa)). The disordered stretch occupies residues 891-996 (GVEEEGSAPA…PTEMKQSGLG (106 aa)). Ser-920 and Ser-963 each carry phosphoserine. The span at 981 to 996 (FSSSRPPTEMKQSGLG) shows a compositional bias: polar residues. 2 positions are modified to phosphoserine: Ser-1013 and Ser-1049. Polar residues predominate over residues 1110–1119 (MHSSQASDNP). The disordered stretch occupies residues 1110–1183 (MHSSQASDNP…PSLNSHVAEE (74 aa)). Ser-1121 and Ser-1128 each carry phosphoserine. The segment covering 1144 to 1162 (SSGPSSTVSSAGPSSPTTV) has biased composition (low complexity). The segment covering 1163–1178 (DGNSQFGFSDQPSLNS) has biased composition (polar residues).

It belongs to the histidine acid phosphatase family. VIP1 subfamily.

It is found in the cytoplasm. The protein localises to the cytosol. The protein resides in the cell membrane. The enzyme catalyses 1D-myo-inositol hexakisphosphate + ATP = 1-diphospho-1D-myo-inositol 2,3,4,5,6-pentakisphosphate + ADP. It catalyses the reaction 5-diphospho-1D-myo-inositol 1,2,3,4,6-pentakisphosphate + ATP + H(+) = 1,5-bis(diphospho)-1D-myo-inositol 2,3,4,6-tetrakisphosphate + ADP. Its function is as follows. Bifunctional inositol kinase that acts in concert with the IP6K kinases IP6K1, IP6K2 and IP6K3 to synthesize the diphosphate group-containing inositol pyrophosphates diphosphoinositol pentakisphosphate, PP-InsP5, and bis-diphosphoinositol tetrakisphosphate, (PP)2-InsP4. PP-InsP5 and (PP)2-InsP4, also respectively called InsP7 and InsP8, regulate a variety of cellular processes, including apoptosis, vesicle trafficking, cytoskeletal dynamics, exocytosis, insulin signaling and neutrophil activation. Phosphorylates inositol hexakisphosphate (InsP6) at position 1 to produce PP-InsP5 which is in turn phosphorylated by IP6Ks to produce (PP)2-InsP4. Alternatively, phosphorylates PP-InsP5 at position 1, produced by IP6Ks from InsP6, to produce (PP)2-InsP4. Activated when cells are exposed to hyperosmotic stress. This Pongo abelii (Sumatran orangutan) protein is Inositol hexakisphosphate and diphosphoinositol-pentakisphosphate kinase 1.